The following is an 84-amino-acid chain: UPF0297 protein Csac_1773 (84 aa).

This sequence belongs to the UPF0297 family.

This is UPF0297 protein Csac_1773 from Caldicellulosiruptor saccharolyticus (strain ATCC 43494 / DSM 8903 / Tp8T 6331).